A 295-amino-acid chain; its full sequence is Transcriptional regulator SirC (295 aa).

The 98-residue stretch at 195–292 folds into the HTH araC/xylS-type domain; the sequence is EKVYNIIISD…KITPLSFMRT (98 aa). DNA-binding regions (H-T-H motif) lie at residues 212–233 and 259–282; these read AEVA…AAEE and ISQV…KRHF.

In terms of biological role, positive regulator of the expression of the invasion-associated type III secretion system encoded within SPI-1 (pathogenicity island 1). In Salmonella typhimurium (strain SL1344), this protein is Transcriptional regulator SirC (sirC).